Reading from the N-terminus, the 146-residue chain is Ferredoxin-thioredoxin reductase catalytic chain, chloroplastic (146 aa).

The N-terminal 26 residues, 1 to 26 (MMSMASTTASPFCPSPMPRGRKCTVR), are a transit peptide targeting the chloroplast. Cys85 contributes to the [4Fe-4S] cluster binding site. Cys87 functions as the Nucleophile in the catalytic mechanism. A disulfide bond links Cys87 and Cys117. [4Fe-4S] cluster is bound by residues Cys104, Cys106, and Cys115.

The protein belongs to the ferredoxin thioredoxin reductase beta subunit family. Heterodimer of subunit A (variable subunit) and subunit B (catalytic subunit). Heterodimeric FTR forms a complex with ferredoxin and thioredoxin. [4Fe-4S] cluster serves as cofactor.

The protein localises to the plastid. Its subcellular location is the chloroplast. The enzyme catalyses [thioredoxin]-disulfide + 2 reduced [2Fe-2S]-[ferredoxin] + 2 H(+) = [thioredoxin]-dithiol + 2 oxidized [2Fe-2S]-[ferredoxin]. Its function is as follows. Catalytic subunit of the ferredoxin-thioredoxin reductase (FTR), which catalyzes the two-electron reduction of thioredoxins by the electrons provided by reduced ferredoxin. In Oryza sativa subsp. japonica (Rice), this protein is Ferredoxin-thioredoxin reductase catalytic chain, chloroplastic.